The primary structure comprises 441 residues: 3-oxo-glucose-6-phosphate:glutamate aminotransferase (441 aa).

Substrate is bound at residue 98-99 (TS). A pyridoxal 5'-phosphate-binding site is contributed by 125-126 (GT). Residue Phe151 participates in substrate binding. 2 residues coordinate pyridoxal 5'-phosphate: Gln225 and Ser242. 244 to 246 (NPY) contacts substrate. Lys247 is subject to N6-(pyridoxal phosphate)lysine. Positions 274 and 282 each coordinate substrate. Asn292 is a pyridoxal 5'-phosphate binding site. Tyr379 contributes to the substrate binding site.

The protein belongs to the DegT/DnrJ/EryC1 family. Homodimer. It depends on pyridoxal 5'-phosphate as a cofactor.

The enzyme catalyses 3-dehydro-D-glucose 6-phosphate + L-glutamate = D-kanosamine 6-phosphate + 2-oxoglutarate. Its pathway is antibiotic biosynthesis; kanosamine biosynthesis. In terms of biological role, involved in the biosynthesis of kanosamine (3-amino-3-deoxy-D-glucose), which is known to have antibiotic and antifungal properties, and to be a precursor of the antibiotic neotrehalosadiamine (3,3'-diamino-3,3'-dideoxy-alpha,beta-trehalose (NTD)). Catalyzes the reversible pyridoxal phosphate-dependent transamination of 3-dehydro-alpha-D-glucose 6-phosphate to form alpha-D-kanosamine-6-phosphate. It can only use alpha-anomer and glutamate is the only amino donor. This is 3-oxo-glucose-6-phosphate:glutamate aminotransferase (ntdA) from Bacillus subtilis (strain 168).